A 184-amino-acid chain; its full sequence is Guanylate kinase (184 aa).

Residues Asn5–Lys183 enclose the Guanylate kinase-like domain. ATP is bound at residue Gly12–Gly19.

Belongs to the guanylate kinase family.

The protein localises to the cytoplasm. It catalyses the reaction GMP + ATP = GDP + ADP. Functionally, essential for recycling GMP and indirectly, cGMP. This chain is Guanylate kinase, found in Prochlorococcus marinus (strain SARG / CCMP1375 / SS120).